A 694-amino-acid chain; its full sequence is ATP-dependent RNA helicase DHX33 (694 aa).

The region spanning 78–246 (LKELEANDTV…FNCKGMYLEG (169 aa)) is the Helicase ATP-binding domain. Residue 91 to 98 (SETGSGKT) participates in ATP binding. The DEAH box motif lies at 188–191 (DEAH). Residues 270–443 (TLFHIHRTTP…SMVLQLLALD (174 aa)) form the Helicase C-terminal domain.

This sequence belongs to the DEAD box helicase family. DEAH subfamily.

The protein localises to the nucleus. It is found in the nucleolus. The catalysed reaction is ATP + H2O = ADP + phosphate + H(+). Its function is as follows. Part of a translational control module, also containing pths/DDX47 and ais/DDX52, which coordinates germline stem cell differentiation with ribosome biogenesis during oogenesis. This module allows for coregulation of ribosomal proteins and non1/GTPBP4, a p53 repressor, preventing p53 stabilization, cell cycle arrest and loss of stem cell differentiation. The chain is ATP-dependent RNA helicase DHX33 from Drosophila melanogaster (Fruit fly).